The primary structure comprises 334 residues: UDP-N-acetylglucosamine 4,6-dehydratase (inverting) (334 aa).

Residues 13 to 16 (TGSF), 37 to 42 (SRDELK), 61 to 62 (DV), Ala-81, Lys-85, and 123 to 124 (LS) each bind NADP(+). Residue Lys-85 participates in substrate binding. The active site involves Lys-127. Residues Tyr-135 and Lys-139 each coordinate NADP(+). Substrate is bound at residue Asn-167. An NADP(+)-binding site is contributed by 168 to 172 (VVGSR). 4 residues coordinate substrate: Val-175, Thr-193, Arg-252, and Glu-255.

Belongs to the polysaccharide synthase family. In terms of assembly, homohexamer. NADP(+) serves as cofactor.

It catalyses the reaction UDP-N-acetyl-alpha-D-glucosamine = UDP-2-acetamido-2,6-dideoxy-beta-L-arabino-hex-4-ulose + H2O. Functionally, catalyzes the first step in the biosynthesis of pseudaminic acid, a sialic-acid-like sugar that is used to modify flagellin. Has both C6 dehydratase and C5 epimerase activities that result in the production of both UDP-2-acetamido-2,6-dideoxy-beta-L-arabino-4-hexulose and UDP-2-acetamido-2,6-dideoxy-alpha-D-xylo-4-hexulose. The sequence is that of UDP-N-acetylglucosamine 4,6-dehydratase (inverting) (pseB) from Campylobacter jejuni subsp. jejuni serotype O:23/36 (strain 81-176).